Here is a 392-residue protein sequence, read N- to C-terminus: MRKIKLIIFPGYYIPHIGGLETHVDEFTKHLSEDENYDIYIFAPNIPKYKEFEIRHNNVKVYRYPAFEIIPNYPVPNIFNIKFWRMFFNLYKIDFDIVMTRTRFFSNTLLGFIFAKLRFKKKKLIHVEHGSAFVKLESEFKNKLSYFYDKTIGKLIFKKADYVVAISKAVKNFILENFVNDKDIPIIYRGLEIEKIESIGEDKKIKEKFKNKIKLCFVGRLYKWKGVENIIKAYVDLPKDLKEKIILIVVGYGEDLERLKKLAGNYLNNGIYFTGKVDFEKAIAIVKASDIYIHSSYKGGGLSSSLLQAMCCGKAIVASPYEGADEVVIDGYNGILLKDNSPEEIKRGIIKLIENNNLRKIYGENAKNFIKENFNWKKSVKEYKKIFERLVN.

This sequence belongs to the glycosyltransferase group 1 family. Glycosyltransferase 4 subfamily.

This is an uncharacterized protein from Methanocaldococcus jannaschii (strain ATCC 43067 / DSM 2661 / JAL-1 / JCM 10045 / NBRC 100440) (Methanococcus jannaschii).